Reading from the N-terminus, the 123-residue chain is Protein Wnt-7b (123 aa).

Ser1 carries the O-palmitoleoyl serine; by PORCN lipid modification. The tract at residues 33-61 (VEVVRASRLRQPTFLKIKQIRSYQKPMET) is disordered linker. Cys89 and Cys104 form a disulfide bridge. Asn90 carries N-linked (GlcNAc...) asparagine glycosylation.

Belongs to the Wnt family. Palmitoleoylation is required for efficient binding to frizzled receptors. Depalmitoleoylation leads to Wnt signaling pathway inhibition.

It is found in the secreted. Its subcellular location is the extracellular space. The protein localises to the extracellular matrix. Functionally, ligand for members of the frizzled family of seven transmembrane receptors that functions in the canonical Wnt/beta-catenin signaling pathway. Required for normal fusion of the chorion and the allantois during placenta development. Required for central nervous system (CNS) angiogenesis and blood-brain barrier regulation. The chain is Protein Wnt-7b (WNT-7B) from Sceloporus occidentalis (Western fence lizard).